A 141-amino-acid chain; its full sequence is MPDGVGRELPRDGTVLAFDYGEKKIGVALGNFVTRHATALTILPNVSVEGRFQAVGELIREWTPVQLVVGMPVNPEGGEQPSMRLARRFGNQLNGRYSLPVEWVDERYSSRMAAMGGARRGELDAEAARIILQQYFDQLPL.

The protein belongs to the YqgF nuclease family.

It is found in the cytoplasm. Its function is as follows. Could be a nuclease involved in processing of the 5'-end of pre-16S rRNA. This chain is Putative pre-16S rRNA nuclease, found in Cupriavidus pinatubonensis (strain JMP 134 / LMG 1197) (Cupriavidus necator (strain JMP 134)).